An 858-amino-acid chain; its full sequence is Lysine-specific demethylase JMJ706 (858 aa).

The 42-residue stretch at 103–144 (CPVYYPTKEEFEDPIGYIQKIAPVASKYGICKIVSPVSASVP) folds into the JmjN domain. One can recognise a JmjC domain in the interval 250 to 420 (KSNWNLKNFS…LGSVASRRYA (171 aa)). Fe cation-binding residues include H293, E295, and H388. Residues 737–746 (QHNKRPEDYG) show a composition bias toward basic and acidic residues. 2 disordered regions span residues 737–791 (QHNK…SAKQ) and 829–858 (SSSTNRVVEQGSSGQRFTRDDKSLGCWPAI). A compositionally biased stretch (polar residues) spans 829 to 844 (SSSTNRVVEQGSSGQR).

The cofactor is Fe(2+).

The protein resides in the nucleus. The catalysed reaction is N(6),N(6),N(6)-trimethyl-L-lysyl(9)-[histone H3] + 2 2-oxoglutarate + 2 O2 = N(6)-methyl-L-lysyl(9)-[histone H3] + 2 formaldehyde + 2 succinate + 2 CO2. In terms of biological role, histone demethylase that demethylates 'Lys-9' (H3K9me) of histone H3 with a specific activity for H3K9me3 and H3K9me2. No activity on H3K4me3, H3K9me1, H3K27me2 and H3K36me3/2. Involved in the control of floral organ development by demethylating H3K9me3 and H3K9me2 in the promoter regions of DH1 and MADS47. The 'Lys-9' demethylation of these two genes is required for induction of their expression. This is Lysine-specific demethylase JMJ706 (JMJ706) from Oryza sativa subsp. japonica (Rice).